Here is a 248-residue protein sequence, read N- to C-terminus: Coproheme decarboxylase (248 aa).

Residues R130, 144 to 148 (YPMDK), H171, Q184, and S222 contribute to the Fe-coproporphyrin III site. Residue Y144 is part of the active site.

Belongs to the ChdC family. Type 1 subfamily. Fe-coproporphyrin III serves as cofactor.

The enzyme catalyses Fe-coproporphyrin III + 2 H2O2 + 2 H(+) = heme b + 2 CO2 + 4 H2O. It catalyses the reaction Fe-coproporphyrin III + H2O2 + H(+) = harderoheme III + CO2 + 2 H2O. The catalysed reaction is harderoheme III + H2O2 + H(+) = heme b + CO2 + 2 H2O. The protein operates within porphyrin-containing compound metabolism; protoheme biosynthesis. Functionally, involved in coproporphyrin-dependent heme b biosynthesis. Catalyzes the decarboxylation of Fe-coproporphyrin III (coproheme) to heme b (protoheme IX), the last step of the pathway. The reaction occurs in a stepwise manner with a three-propionate intermediate. The protein is Coproheme decarboxylase of Geobacillus sp. (strain WCH70).